Reading from the N-terminus, the 384-residue chain is uncharacterized protein (384 aa).

This is an uncharacterized protein from Methanocaldococcus jannaschii (strain ATCC 43067 / DSM 2661 / JAL-1 / JCM 10045 / NBRC 100440) (Methanococcus jannaschii).